The following is a 616-amino-acid chain: Glycogenin-1 (616 aa).

3 residues coordinate UDP: Leu-10, Tyr-16, and Arg-95. Leu-10, Tyr-16, Arg-95, Lys-104, Asp-120, Asp-122, Asn-158, Ser-159, Asp-185, Asp-188, and Gln-189 together coordinate UDP-alpha-D-glucose. Residues Asp-120 and Asp-122 each contribute to the UDP site. Positions 120 and 122 each coordinate Mn(2+). Tyr-230 is a glycosylation site (O-linked (Glc...) tyrosine). His-247, Gly-250, and Lys-253 together coordinate UDP. His-247 is a Mn(2+) binding site. Gly-250 and Lys-253 together coordinate UDP-alpha-D-glucose. Residues 283–302 (HQLNNEVSKPKISDSDKTET) show a composition bias toward basic and acidic residues. Disordered stretches follow at residues 283 to 320 (HQLNNEVSKPKISDSDKTETPETITPVDAPPSNEPTTN), 335 to 354 (NQNAEPVPNSDHSPAPNPVP), and 371 to 516 (TNQP…SVDD). Basic and acidic residues predominate over residues 377 to 386 (ESREYSKEND). Positions 400-419 (SPPNSTQEPNSSYSVVSTQA) are enriched in polar residues. Low complexity predominate over residues 450–461 (STAASSNNNVSN). Composition is skewed to polar residues over residues 462-485 (QPDNKNFSNSKENNISVEPSPSNP) and 492-503 (DNIQKPSVSTND). O-linked (Glc...) tyrosine glycosylation is present at Tyr-598.

It belongs to the glycosyltransferase 8 family. Glycogenin subfamily. Mn(2+) serves as cofactor.

Its subcellular location is the cytoplasm. The protein localises to the vacuole. The enzyme catalyses L-tyrosyl-[glycogenin] + UDP-alpha-D-glucose = alpha-D-glucosyl-L-tyrosyl-[glycogenin] + UDP + H(+). It catalyses the reaction [1,4-alpha-D-glucosyl](n)-L-tyrosyl-[glycogenin] + UDP-alpha-D-glucose = [1,4-alpha-D-glucosyl](n+1)-L-tyrosyl-[glycogenin] + UDP + H(+). Functionally, self-glucosylating initiator of glycogen synthesis. It catalyzes the formation of a short alpha (1,4)-glucosyl chain covalently attached via a glucose 1-O-tyrosyl linkage to internal tyrosine residues and these chains act as primers for the elongation reaction catalyzed by glycogen synthase. Capable of transferring glucosyl residues to unbound acceptors such as free oligoglucans or oligoglucan derivatives. This is Glycogenin-1 (GLG1) from Saccharomyces cerevisiae (strain YJM789) (Baker's yeast).